The sequence spans 446 residues: Phosphoglucosamine mutase (446 aa).

The active-site Phosphoserine intermediate is the Ser101. Mg(2+)-binding residues include Ser101, Asp240, Asp242, and Asp244. Ser101 carries the phosphoserine modification.

This sequence belongs to the phosphohexose mutase family. Mg(2+) is required as a cofactor. Post-translationally, activated by phosphorylation.

The catalysed reaction is alpha-D-glucosamine 1-phosphate = D-glucosamine 6-phosphate. Its function is as follows. Catalyzes the conversion of glucosamine-6-phosphate to glucosamine-1-phosphate. This Coxiella burnetii (strain Dugway 5J108-111) protein is Phosphoglucosamine mutase.